A 616-amino-acid chain; its full sequence is Dihydroxy-acid dehydratase (616 aa).

Asp81 contacts Mg(2+). Cys122 contributes to the [2Fe-2S] cluster binding site. Mg(2+) contacts are provided by Asp123 and Lys124. Lys124 carries the N6-carboxylysine modification. Residue Cys195 participates in [2Fe-2S] cluster binding. Glu491 is a Mg(2+) binding site. Ser517 acts as the Proton acceptor in catalysis.

Belongs to the IlvD/Edd family. In terms of assembly, homodimer. It depends on [2Fe-2S] cluster as a cofactor. Requires Mg(2+) as cofactor.

It carries out the reaction (2R)-2,3-dihydroxy-3-methylbutanoate = 3-methyl-2-oxobutanoate + H2O. It catalyses the reaction (2R,3R)-2,3-dihydroxy-3-methylpentanoate = (S)-3-methyl-2-oxopentanoate + H2O. It functions in the pathway amino-acid biosynthesis; L-isoleucine biosynthesis; L-isoleucine from 2-oxobutanoate: step 3/4. The protein operates within amino-acid biosynthesis; L-valine biosynthesis; L-valine from pyruvate: step 3/4. In terms of biological role, functions in the biosynthesis of branched-chain amino acids. Catalyzes the dehydration of (2R,3R)-2,3-dihydroxy-3-methylpentanoate (2,3-dihydroxy-3-methylvalerate) into 2-oxo-3-methylpentanoate (2-oxo-3-methylvalerate) and of (2R)-2,3-dihydroxy-3-methylbutanoate (2,3-dihydroxyisovalerate) into 2-oxo-3-methylbutanoate (2-oxoisovalerate), the penultimate precursor to L-isoleucine and L-valine, respectively. This is Dihydroxy-acid dehydratase from Shigella boydii serotype 4 (strain Sb227).